A 414-amino-acid chain; its full sequence is Esterase FrsA (414 aa).

The protein belongs to the FrsA family.

It carries out the reaction a carboxylic ester + H2O = an alcohol + a carboxylate + H(+). Catalyzes the hydrolysis of esters. This Shigella sonnei (strain Ss046) protein is Esterase FrsA.